A 226-amino-acid polypeptide reads, in one-letter code: DNA mismatch repair protein MutH (226 aa).

The protein belongs to the MutH family.

It localises to the cytoplasm. In terms of biological role, sequence-specific endonuclease that cleaves unmethylated GATC sequences. It is involved in DNA mismatch repair. In Vibrio campbellii (strain ATCC BAA-1116), this protein is DNA mismatch repair protein MutH.